A 234-amino-acid polypeptide reads, in one-letter code: Leucyl/phenylalanyl-tRNA--protein transferase (234 aa).

It belongs to the L/F-transferase family.

The protein localises to the cytoplasm. The enzyme catalyses N-terminal L-lysyl-[protein] + L-leucyl-tRNA(Leu) = N-terminal L-leucyl-L-lysyl-[protein] + tRNA(Leu) + H(+). It carries out the reaction N-terminal L-arginyl-[protein] + L-leucyl-tRNA(Leu) = N-terminal L-leucyl-L-arginyl-[protein] + tRNA(Leu) + H(+). It catalyses the reaction L-phenylalanyl-tRNA(Phe) + an N-terminal L-alpha-aminoacyl-[protein] = an N-terminal L-phenylalanyl-L-alpha-aminoacyl-[protein] + tRNA(Phe). In terms of biological role, functions in the N-end rule pathway of protein degradation where it conjugates Leu, Phe and, less efficiently, Met from aminoacyl-tRNAs to the N-termini of proteins containing an N-terminal arginine or lysine. The sequence is that of Leucyl/phenylalanyl-tRNA--protein transferase from Klebsiella pneumoniae (strain 342).